The primary structure comprises 66 residues: Large ribosomal subunit protein bL35c (66 aa).

This sequence belongs to the bacterial ribosomal protein bL35 family.

It is found in the plastid. Its subcellular location is the chloroplast. This Gracilaria tenuistipitata var. liui (Red alga) protein is Large ribosomal subunit protein bL35c.